The following is a 70-amino-acid chain: Neuropeptide SIFamide (70 aa).

Residues 1–22 (MRFIVALCLFAIVMCIIHKAEG) form the signal peptide. Phenylalanine 34 carries the phenylalanine amide modification. A propeptide spanning residues 38 to 70 (GVVEYDTTGRALSALCEIASETCQAWYQTLENK) is cleaved from the precursor.

As to expression, expressed in antennal lobe (AL) and gnathal ganglion (GNG) with expression detected in most animals (at protein level). Not expressed in corpora cardiaca (CC) and corpora allata (CA) (at protein level).

The protein resides in the secreted. Its function is as follows. Ligand for the neuropeptide SIFamide receptor. In Agrotis ipsilon (Black cutworm moth), this protein is Neuropeptide SIFamide.